Here is a 303-residue protein sequence, read N- to C-terminus: Probable 5-dehydro-4-deoxyglucarate dehydratase (303 aa).

It belongs to the DapA family.

It carries out the reaction 5-dehydro-4-deoxy-D-glucarate + H(+) = 2,5-dioxopentanoate + CO2 + H2O. It functions in the pathway carbohydrate acid metabolism; D-glucarate degradation; 2,5-dioxopentanoate from D-glucarate: step 2/2. In Pseudomonas syringae pv. syringae (strain B728a), this protein is Probable 5-dehydro-4-deoxyglucarate dehydratase.